The sequence spans 206 residues: MDSAGQDINLNSPNKGLLSDSMTDVPVDTGVAARTPAVEGLTEAEEEELRAELTKVEEEIVTLRQVLAAKERHCGELKRRLGLSTLGGLKQNLSRSWHDVQVSNAYVKTSEKLGEWNEKVTQSDLYKKTQETLSQAGQKTSAALSTMGSAISRKLGDMRNSATFKSFEDRVGTIKSKVVGDRENGSDSLPSSAGSGDKPLSDPAPF.

At Met-1 the chain carries N-acetylmethionine. Polar residues predominate over residues 1 to 14; that stretch reads MDSAGQDINLNSPN. Residues 1-24 form a disordered region; it reads MDSAGQDINLNSPNKGLLSDSMTD. 4 positions are modified to phosphoserine: Ser-3, Ser-12, Ser-19, and Ser-21. A coiled-coil region spans residues 38 to 82; the sequence is VEGLTEAEEEELRAELTKVEEEIVTLRQVLAAKERHCGELKRRLG. Phosphoserine is present on residues Ser-96, Ser-149, and Ser-161. The residue at position 163 (Thr-163) is a Phosphothreonine. Residue Ser-166 is modified to Phosphoserine. A Phosphothreonine modification is found at Thr-173. Residues 175–185 are compositionally biased toward basic and acidic residues; the sequence is KSKVVGDRENG. The tract at residues 175–206 is disordered; that stretch reads KSKVVGDRENGSDSLPSSAGSGDKPLSDPAPF. Residues Ser-192 and Ser-195 each carry the phosphoserine modification.

The protein belongs to the TPD52 family. In terms of assembly, forms a homodimer or heterodimer with other members of the family. Interacts with MAL2.

This Pongo abelii (Sumatran orangutan) protein is Tumor protein D54 (TPD52L2).